The chain runs to 460 residues: Ufm1-specific protease 2 (460 aa).

Residues Cys-293, Asp-417, and His-419 contribute to the active site.

Belongs to the peptidase C78 family.

The protein localises to the endoplasmic reticulum. It is found in the cytoplasm. Its subcellular location is the nucleus. Functionally, thiol-dependent isopeptidase that specifically cleaves UFM1, a ubiquitin-like modifier protein, from conjugated proteins. While it is also able to mediate the processing of UFM1 precursors, a prerequisite for conjugation reactions, UFSP2 mainly acts as a protein deUFMylase that mediates deconjugation of UFM1 from target proteins. The polypeptide is Ufm1-specific protease 2 (Gallus gallus (Chicken)).